The sequence spans 462 residues: MQPLNIYNTLAREKQPFVPIEPGKVRMYVCGMTVYDYCHVGHARVMVVFDMVHRWLRAAGYEVTYVQNITDIDDKIIRRAVENGETIGELTTRFIQYMHEDAAALGVIRPDHEPRATDYVPQMLDMIGKLEAKGLAYQASDGDVNYSVRKFDGYGKLSGKSLEDLRAGERVSANDAKQDPLDFVLWKSAKASEPPESKWDSKWGAGRPGWHIECSAMSCALLGEHFDIHGGGADLQFPHHENEIAQSEGASGKPFVNLWMHNGFVRINDEKMSKSLGNFFTIREVLKAYDAEVVRFFILRAHYRSPLNYSDAHLDDARHALTRLYTALKDSQPGGCAVDWDEPHAKRFAEAMGDDFNTPIAMSVLFDLASEINRTGSTAAARQLKGLAGTLGLLERDPHTFLQGGKSADGPSPDEIEKLIAARKAAKAERNFAEADRIRAQLLEAGIVLEDKPGGATEWRRA.

Cys30 is a Zn(2+) binding site. The 'HIGH' region motif lies at 32 to 42; sequence MTVYDYCHVGH. Zn(2+) is bound by residues Cys214, His239, and Glu243. The 'KMSKS' region signature appears at 271–275; that stretch reads KMSKS. Lys274 lines the ATP pocket.

It belongs to the class-I aminoacyl-tRNA synthetase family. Monomer. Requires Zn(2+) as cofactor.

It localises to the cytoplasm. It carries out the reaction tRNA(Cys) + L-cysteine + ATP = L-cysteinyl-tRNA(Cys) + AMP + diphosphate. This chain is Cysteine--tRNA ligase, found in Cupriavidus taiwanensis (strain DSM 17343 / BCRC 17206 / CCUG 44338 / CIP 107171 / LMG 19424 / R1) (Ralstonia taiwanensis (strain LMG 19424)).